We begin with the raw amino-acid sequence, 339 residues long: MKPYPIDLVSVVIPVYNEEASLPELLRRTEAACLELGRAFEIVLVDDGSRDRSAELLQAAAERDGSAVVAVILNRNYGQHAAILAGFEQSRGDLVITLDADLQNPPEEIPRLVERAAQGYDVVGSIRAERQDSAWRRWPSRLVNLAVQRSTGVAMHDYGCMLRAYRRSIVEAMLACRERSTFIPILANGFARHTCEIRVAHAERAHGESKYSAMRLLNLMFDLVTCMTTTPLRLLSLVGGGMALAGFLFALFLLVLRLAFGAAWAGNGLFVLFAVLFMFSGVQLLGMGLLGEYLGRMYSDVRARPRFFIERVVRATPSALPSALQRAGFTSSSSEPSTP.

Helical transmembrane passes span 235–255 (LSLV…FLLV) and 269–289 (LFVL…GMGL).

This sequence belongs to the glycosyltransferase 2 family.

Its subcellular location is the cell inner membrane. The catalysed reaction is UDP-4-deoxy-4-formamido-beta-L-arabinose + di-trans,octa-cis-undecaprenyl phosphate = 4-deoxy-4-formamido-alpha-L-arabinopyranosyl di-trans,octa-cis-undecaprenyl phosphate + UDP. It participates in glycolipid biosynthesis; 4-amino-4-deoxy-alpha-L-arabinose undecaprenyl phosphate biosynthesis; 4-amino-4-deoxy-alpha-L-arabinose undecaprenyl phosphate from UDP-4-deoxy-4-formamido-beta-L-arabinose and undecaprenyl phosphate: step 1/2. It functions in the pathway bacterial outer membrane biogenesis; lipopolysaccharide biosynthesis. Its function is as follows. Catalyzes the transfer of 4-deoxy-4-formamido-L-arabinose from UDP to undecaprenyl phosphate. The modified arabinose is attached to lipid A and is required for resistance to polymyxin and cationic antimicrobial peptides. The chain is Undecaprenyl-phosphate 4-deoxy-4-formamido-L-arabinose transferase from Pseudomonas aeruginosa (strain LESB58).